The following is a 211-amino-acid chain: C-type lectin domain family 2 member L (211 aa).

The segment at 1-53 (MEPAREPPARARPPPPAARPAPAAPRPRSPAEAEARGPEGLLRRSGSGYEGST) is disordered. Residues 10 to 28 (RARPPPPAARPAPAAPRPR) show a composition bias toward pro residues. S29 is subject to Phosphoserine. A helical transmembrane segment spans residues 66–86 (LLLGAIAVLLFAILVVMSILA). 3 disulfide bridges follow: C97–C108, C125–C205, and C184–C197. A C-type lectin domain is found at 104-206 (YGRKCYYFSE…CLTTRPWVCS (103 aa)).

It is found in the membrane. The polypeptide is C-type lectin domain family 2 member L (Clec2l) (Rattus norvegicus (Rat)).